The chain runs to 99 residues: UPF0386 protein mll0189 (99 aa).

Belongs to the UPF0386 family.

The sequence is that of UPF0386 protein mll0189 from Mesorhizobium japonicum (strain LMG 29417 / CECT 9101 / MAFF 303099) (Mesorhizobium loti (strain MAFF 303099)).